The primary structure comprises 130 residues: UPF0225 protein DR_0483 (130 aa).

It belongs to the UPF0225 family.

The chain is UPF0225 protein DR_0483 from Deinococcus radiodurans (strain ATCC 13939 / DSM 20539 / JCM 16871 / CCUG 27074 / LMG 4051 / NBRC 15346 / NCIMB 9279 / VKM B-1422 / R1).